The following is a 341-amino-acid chain: N-acetyl-gamma-glutamyl-phosphate reductase (341 aa).

Cys-147 is a catalytic residue.

This sequence belongs to the NAGSA dehydrogenase family. Type 1 subfamily.

It is found in the cytoplasm. It carries out the reaction N-acetyl-L-glutamate 5-semialdehyde + phosphate + NADP(+) = N-acetyl-L-glutamyl 5-phosphate + NADPH + H(+). It participates in amino-acid biosynthesis; L-arginine biosynthesis; N(2)-acetyl-L-ornithine from L-glutamate: step 3/4. Catalyzes the NADPH-dependent reduction of N-acetyl-5-glutamyl phosphate to yield N-acetyl-L-glutamate 5-semialdehyde. This Dehalococcoides mccartyi (strain CBDB1) protein is N-acetyl-gamma-glutamyl-phosphate reductase.